Reading from the N-terminus, the 34-residue chain is Photosystem II reaction center protein M (34 aa).

Residues 5–25 (ILAFIATTLFVLVPTAFLLII) traverse the membrane as a helical segment.

Belongs to the PsbM family. In terms of assembly, PSII is composed of 1 copy each of membrane proteins PsbA, PsbB, PsbC, PsbD, PsbE, PsbF, PsbH, PsbI, PsbJ, PsbK, PsbL, PsbM, PsbT, PsbX, PsbY, PsbZ, Psb30/Ycf12, at least 3 peripheral proteins of the oxygen-evolving complex and a large number of cofactors. It forms dimeric complexes.

Its subcellular location is the plastid. It localises to the chloroplast thylakoid membrane. In terms of biological role, one of the components of the core complex of photosystem II (PSII). PSII is a light-driven water:plastoquinone oxidoreductase that uses light energy to abstract electrons from H(2)O, generating O(2) and a proton gradient subsequently used for ATP formation. It consists of a core antenna complex that captures photons, and an electron transfer chain that converts photonic excitation into a charge separation. This subunit is found at the monomer-monomer interface. The chain is Photosystem II reaction center protein M from Citrus sinensis (Sweet orange).